A 222-amino-acid polypeptide reads, in one-letter code: Glutathione S-transferase A2 (222 aa).

Residue Ala-2 is modified to N-acetylalanine. The GST N-terminal domain maps to 3–83 (GKPVLHYFNA…YIATKYDLYG (81 aa)). Lys-4 carries the post-translational modification N6-succinyllysine. Residues Tyr-9, Lys-45, 54–55 (QV), and 67–68 (QT) contribute to the glutathione site. Residues 85-208 (DMKERALIDM…HPGSQRKPPL (124 aa)) enclose the GST C-terminal domain.

The protein belongs to the GST superfamily. Alpha family. As to quaternary structure, homodimer. Heterodimer of GSTA1 and GSTA2. As to expression, expressed in the kidney.

The enzyme catalyses RX + glutathione = an S-substituted glutathione + a halide anion + H(+). In terms of biological role, catalyzes the conjugation of glutathione to a large variety of electrophilic compounds. In Mus musculus (Mouse), this protein is Glutathione S-transferase A2 (Gsta2).